Reading from the N-terminus, the 656-residue chain is DNA ligase (656 aa).

NAD(+) is bound by residues 32-36 (DAIYD) and 81-82 (SL). Lys-112 (N6-AMP-lysine intermediate) is an active-site residue. NAD(+)-binding residues include Arg-133, Glu-167, and Lys-306. The Zn(2+) site is built by Cys-400, Cys-403, Cys-416, and Cys-421. Positions 577-656 (KSSSVFNNKT…ELLKRLKELD (80 aa)) constitute a BRCT domain.

It belongs to the NAD-dependent DNA ligase family. LigA subfamily. The cofactor is Mg(2+). Requires Mn(2+) as cofactor.

It catalyses the reaction NAD(+) + (deoxyribonucleotide)n-3'-hydroxyl + 5'-phospho-(deoxyribonucleotide)m = (deoxyribonucleotide)n+m + AMP + beta-nicotinamide D-nucleotide.. Functionally, DNA ligase that catalyzes the formation of phosphodiester linkages between 5'-phosphoryl and 3'-hydroxyl groups in double-stranded DNA using NAD as a coenzyme and as the energy source for the reaction. It is essential for DNA replication and repair of damaged DNA. In Helicobacter pylori (strain ATCC 700392 / 26695) (Campylobacter pylori), this protein is DNA ligase.